The sequence spans 391 residues: Chorismate synthase (391 aa).

Residue arginine 48 participates in NADP(+) binding. FMN contacts are provided by residues 126 to 128 (RAS), glycine 286, 301 to 305 (KPTSS), and arginine 328.

The protein belongs to the chorismate synthase family. Requires FMNH2 as cofactor.

It carries out the reaction 5-O-(1-carboxyvinyl)-3-phosphoshikimate = chorismate + phosphate. It participates in metabolic intermediate biosynthesis; chorismate biosynthesis; chorismate from D-erythrose 4-phosphate and phosphoenolpyruvate: step 7/7. In terms of biological role, catalyzes the anti-1,4-elimination of the C-3 phosphate and the C-6 proR hydrogen from 5-enolpyruvylshikimate-3-phosphate (EPSP) to yield chorismate, which is the branch point compound that serves as the starting substrate for the three terminal pathways of aromatic amino acid biosynthesis. This reaction introduces a second double bond into the aromatic ring system. The polypeptide is Chorismate synthase (Saccharolobus islandicus (strain Y.N.15.51 / Yellowstone #2) (Sulfolobus islandicus)).